The chain runs to 393 residues: MSMKQRVIIVGGGPVGLLTALGLAKAGTNVVVLEAESQPSDSPRALVYHFPVLPHLKRLGVLDDCVAAGLMRQNFAWRVHSTSEMIFWDLSCLEGDVELPYALHLGQDKLSRILIEHLKALPNVEVRYSSPVVDCEVGPRSVRVVLGGESPGVIVEGDWLIGADGANSFVRREVLNQNFFGITWPQRYVATNTRFDFDKLGFGKTTMQVDDVYGSVICNIDADSLWRVTFMEDPNLPMEGIRGRIDQVFKELLPTNDPYEVVAFSPYRMHQRVTDRMRNGRVILIGDAAHVTNPTGGLGLTGGMFDAFALTSVLNQVIHDGRSEDILDVFEADRRRKFIELVSPRASDNLRNLYHQKPGEGKNDWVNNTRSISKDIDRMRDALRFPETMETFL.

FAD-binding positions include 6–35 (RVII…VLEA) and 277–287 (MRNGRVILIGD).

It belongs to the PheA/TfdB FAD monooxygenase family. In terms of assembly, homodimer. It depends on FAD as a cofactor.

The catalysed reaction is 4-(6-hydroxypyridin-3-yl)-4-oxobutanoate + 2 NADH + O2 + 2 H(+) = 2,5-dihydroxypyridine + succinate semialdehyde + 2 NAD(+) + H2O. It functions in the pathway alkaloid degradation; nicotine degradation. Inhibited by Cu(2+) and Zn(2+). Its function is as follows. Involved in the nicotine degradation. Catalyzes the cleavage of 6-hydroxy-3-succinoylpyridine (HSP) by incorporation of oxygen at the 3-position to produce to 2,5-dihydroxypyridine (DHP) and succinic semialdehyde. The sequence is that of 6-hydroxy-3-succinoylpyridine 3-monooxygenase HspB from Pseudomonas putida (strain DSM 28022 / S16).